The following is a 429-amino-acid chain: Adenylosuccinate synthetase (429 aa).

GTP contacts are provided by residues 12–18 (GDEGKGK) and 40–42 (GHT). The active-site Proton acceptor is the Asp13. Mg(2+) is bound by residues Asp13 and Gly40. Residues 13–16 (DEGK), 38–41 (NAGH), Thr128, Arg142, Gln223, and Arg302 contribute to the IMP site. Residue His41 is the Proton donor of the active site. Substrate is bound at residue 298-304 (TVTGRPR). GTP is bound by residues Arg304, 330-332 (LLD), and 412-414 (SVG).

This sequence belongs to the adenylosuccinate synthetase family. Homodimer. Mg(2+) is required as a cofactor.

It localises to the cytoplasm. The enzyme catalyses IMP + L-aspartate + GTP = N(6)-(1,2-dicarboxyethyl)-AMP + GDP + phosphate + 2 H(+). It functions in the pathway purine metabolism; AMP biosynthesis via de novo pathway; AMP from IMP: step 1/2. Functionally, plays an important role in the de novo pathway of purine nucleotide biosynthesis. Catalyzes the first committed step in the biosynthesis of AMP from IMP. The chain is Adenylosuccinate synthetase from Lactobacillus delbrueckii subsp. bulgaricus (strain ATCC 11842 / DSM 20081 / BCRC 10696 / JCM 1002 / NBRC 13953 / NCIMB 11778 / NCTC 12712 / WDCM 00102 / Lb 14).